The following is a 246-amino-acid chain: Small ribosomal subunit protein uS2 (246 aa).

The segment at 225 to 246 (SKSSASVPNKDEYVAAEDGAAE) is disordered.

Belongs to the universal ribosomal protein uS2 family.

The chain is Small ribosomal subunit protein uS2 from Cellvibrio japonicus (strain Ueda107) (Pseudomonas fluorescens subsp. cellulosa).